Reading from the N-terminus, the 990-residue chain is Activator of stress genes protein 1 (990 aa).

The disordered stretch occupies residues 1–88 (MPKREIEDTQ…NKPKSQENKR (88 aa)). Over residues 9-23 (TQSPYSSTGLVSTGE) the composition is skewed to polar residues. Positions 24-61 (SPKTSTSTPTSSTNNRAATTTTNNTSTTSTSLLKSNSN) are enriched in low complexity. Positions 95-121 (CDTCRQKKVKCDGKQPCIHCTVYSYKC) form a DNA-binding region, zn(2)-C6 fungal-type. 3 stretches are compositionally biased toward low complexity: residues 160 to 179 (NNNS…QQHV), 282 to 293 (SFDDSSNSAVSS), and 773 to 793 (TATT…NSNS). Disordered stretches follow at residues 160–192 (NNNS…PADE), 255–295 (QDPD…SSPR), 764–800 (RTAS…TLPA), and 915–944 (SNNN…NGVA).

This sequence belongs to the ASG1 family.

It is found in the nucleus. Functionally, transcription factor necessary to sustain growth on non-fermentative carbon sources such as sodium acetate, acetic acid, or ethanol. Plays a role in hyphal formation. This Candida albicans (strain SC5314 / ATCC MYA-2876) (Yeast) protein is Activator of stress genes protein 1 (ASG1).